The following is a 234-amino-acid chain: Large ribosomal subunit protein uL1 (234 aa).

Belongs to the universal ribosomal protein uL1 family. In terms of assembly, part of the 50S ribosomal subunit.

Functionally, binds directly to 23S rRNA. The L1 stalk is quite mobile in the ribosome, and is involved in E site tRNA release. Its function is as follows. Protein L1 is also a translational repressor protein, it controls the translation of the L11 operon by binding to its mRNA. This chain is Large ribosomal subunit protein uL1, found in Bartonella tribocorum (strain CIP 105476 / IBS 506).